Consider the following 425-residue polypeptide: Serine--tRNA ligase (425 aa).

233–235 (TAE) serves as a coordination point for L-serine. Residue 264 to 266 (RAE) coordinates ATP. Residue Glu-287 participates in L-serine binding. 351-354 (EISS) is an ATP binding site. Ser-387 lines the L-serine pocket.

The protein belongs to the class-II aminoacyl-tRNA synthetase family. Type-1 seryl-tRNA synthetase subfamily. As to quaternary structure, homodimer. The tRNA molecule binds across the dimer.

It is found in the cytoplasm. It carries out the reaction tRNA(Ser) + L-serine + ATP = L-seryl-tRNA(Ser) + AMP + diphosphate + H(+). The enzyme catalyses tRNA(Sec) + L-serine + ATP = L-seryl-tRNA(Sec) + AMP + diphosphate + H(+). Its pathway is aminoacyl-tRNA biosynthesis; selenocysteinyl-tRNA(Sec) biosynthesis; L-seryl-tRNA(Sec) from L-serine and tRNA(Sec): step 1/1. Functionally, catalyzes the attachment of serine to tRNA(Ser). Is also able to aminoacylate tRNA(Sec) with serine, to form the misacylated tRNA L-seryl-tRNA(Sec), which will be further converted into selenocysteinyl-tRNA(Sec). The chain is Serine--tRNA ligase from Clostridium perfringens (strain ATCC 13124 / DSM 756 / JCM 1290 / NCIMB 6125 / NCTC 8237 / Type A).